The chain runs to 224 residues: MALLISLPGGTPAMAQVLLLLSSGCLHAGNSERYNRKNGFGVNQPERCSGVQGGSIDIPFSFYFPWKLAKDPQMSIAWKWKDFHGEVIYNSSLPFIHEHFKGRLILNWTQGQTSGVLRILNLKESDQAQYFSRVNLQSTEGMKLWQSIPGTQLNVTQALNTTMRSPFIVTSEFTTAGLEHTSDQRNPSLMNLGAMVTMLLAKVLVIVLVYGWMIFLRWKQRPAH.

The N-terminal stretch at 1–28 (MALLISLPGGTPAMAQVLLLLSSGCLHA) is a signal peptide. The Extracellular portion of the chain corresponds to 29–195 (GNSERYNRKN…NPSLMNLGAM (167 aa)). Asn-90, Asn-107, and Asn-154 each carry an N-linked (GlcNAc...) asparagine glycan. The chain crosses the membrane as a helical span at residues 196–216 (VTMLLAKVLVIVLVYGWMIFL). Over 217–224 (RWKQRPAH) the chain is Cytoplasmic.

Interacts with CD99. Probably associates with DAP12. Widely expressed with highest levels in spleen, liver and lung. Predominantly expressed by natural killer cells, macrophages, and granulocytes and dendritic cells (BM-DC).

It localises to the membrane. Functionally, paired receptors consist of highly related activating and inhibitory receptors and are widely involved in the regulation of the immune system. PILRB is thought to act as a cellular signaling activating receptor that associates with ITAM-bearing adapter molecules on the cell surface. Seems to associate with DAP12 and is a receptor for CD99. May be involved in target cell recognition by natural killer cells and in activation of dendritic cells. The sequence is that of Paired immunoglobulin-like type 2 receptor beta (Pilrb) from Mus musculus (Mouse).